Consider the following 191-residue polypeptide: Protein GrpE (191 aa).

2 stretches are compositionally biased toward basic and acidic residues: residues 1–19 and 29–45; these read MKDEHNQEHDHLSPKEPES and QQGEEKQEASEKEGEIK. Residues 1 to 45 are disordered; the sequence is MKDEHNQEHDHLSPKEPESYQKAYACKEQQGEEKQEASEKEGEIK.

Belongs to the GrpE family. In terms of assembly, homodimer.

It localises to the cytoplasm. Functionally, participates actively in the response to hyperosmotic and heat shock by preventing the aggregation of stress-denatured proteins, in association with DnaK and GrpE. It is the nucleotide exchange factor for DnaK and may function as a thermosensor. Unfolded proteins bind initially to DnaJ; upon interaction with the DnaJ-bound protein, DnaK hydrolyzes its bound ATP, resulting in the formation of a stable complex. GrpE releases ADP from DnaK; ATP binding to DnaK triggers the release of the substrate protein, thus completing the reaction cycle. Several rounds of ATP-dependent interactions between DnaJ, DnaK and GrpE are required for fully efficient folding. In Helicobacter pylori (strain J99 / ATCC 700824) (Campylobacter pylori J99), this protein is Protein GrpE.